The following is a 322-amino-acid chain: MDAVQQQTNSTSNIDSAKCQKLKRFVIVGLLITIGILSWHFYEYFHSKPLPKTPDDVLTLSKNLYAEETEVSPYLYKVNLQGKTTSGAHDDRAPRNLFELHQDLLARDANSTTALLMRLFDNYELDVAVQEHPTPEHVQEQYDFLRAVMGTRVMKLTMRFLVHKDIVSVEYDDQLRLLQELWFTPYSRGRGIVGSSSFEHVFMAEIRDQKVLGLHNWLYFADQEQRGNVDYKGWLNHKEMGKHNQMVLSVRYTFHNINKPVNGFFVGISPELDMALYTACFLATAKEEPCHIQLGHASATIVSHEWKWNGMRLIGTVYPDSS.

Residues 25–45 (FVIVGLLITIGILSWHFYEYF) traverse the membrane as a helical segment. In terms of domain architecture, EndoU spans 53-322 (TPDDVLTLSK…LIGTVYPDSS (270 aa)). Catalysis depends on residues histidine 200, histidine 215, and lysine 259.

Belongs to the ENDOU family. In terms of assembly, monomer. Mn(2+) serves as cofactor. Predominantly expressed in head.

The protein localises to the membrane. The catalysed reaction is a ribonucleotidyl-ribonucleotide-RNA = a 3'-end 2',3'-cyclophospho-ribonucleotide-RNA + a 5'-end dephospho-ribonucleoside-RNA. Its function is as follows. Endoribonuclease that cleaves single-stranded RNAs at uridylates and releases products that have 2'-3'-cyclic phosphate termini. Preferentially cleaves single stranded RNA at poly-U sites with CU, UC and AU sites cleaved less efficiently. May target mRNAs encoding proteins involved in lipid metabolism to regulate their expression. Regulates levels of TBPH protein, but not mRNA, by an as yet unknown mechanism. Important for neuronal development or function. The polypeptide is Uridylate-specific endoribonuclease EndoU (Drosophila melanogaster (Fruit fly)).